Consider the following 129-residue polypeptide: uncharacterized protein (129 aa).

Residues 46 to 66 (FFHFFFSFLLHLISPAVTGGI) traverse the membrane as a helical segment.

The protein localises to the membrane. This is an uncharacterized protein from Saccharomyces cerevisiae (strain ATCC 204508 / S288c) (Baker's yeast).